The following is a 243-amino-acid chain: MAKVEQVLSLEPQHELKFRGPFTDVVTTNLKLGNPTDRNVCFKVKTTAPRRYCVRPNSGIIDAGASINVSVMLQPFDYDPNEKSKHKFMVQSMFAPTDTSDMEAVWKEAKPEDLMDSKLRCVFELPAENDKPHDVEINKIISTTASKTETPIVSKSLSSSLDDTEVKKVMEECKRLQGEVQRLREENKQFKEEDGLRMRKTVQSNSPISALAPTGKEEGLSTRLLALVVLFFIVGVIIGKIAL.

Residue Ala2 is modified to N-acetylalanine. Residues 2–222 are Cytoplasmic-facing; it reads AKVEQVLSLE…PTGKEEGLST (221 aa). Positions 7–124 constitute an MSP domain; sequence VLSLEPQHEL…MDSKLRCVFE (118 aa). The residue at position 146 (Ser146) is a Phosphoserine. Residue Lys147 forms a Glycyl lysine isopeptide (Lys-Gly) (interchain with G-Cter in SUMO1) linkage. Thr150 bears the Phosphothreonine mark. Phosphoserine occurs at positions 156, 158, 159, 160, and 206. Residues 159–196 adopt a coiled-coil conformation; the sequence is SSLDDTEVKKVMEECKRLQGEVQRLREENKQFKEEDGL. A helical; Anchor for type IV membrane protein transmembrane segment spans residues 223–243; the sequence is RLLALVVLFFIVGVIIGKIAL.

This sequence belongs to the VAMP-associated protein (VAP) (TC 9.B.17) family. In terms of assembly, homodimer, and heterodimer with VAPA. Interacts with VAMP1 and VAMP2. Interacts (via MSP domain) with ZFYVE27. Interacts with RMDN3. Interacts with KIF5A in a ZFYVE27-dependent manner. Interacts (via MSP domain) with STARD3 (via phospho-FFAT motif). Interacts with STARD3NL (via FFAT motif). Interacts with CERT1. Interacts with PLEKHA3 and SACM1L to form a ternary complex. Interacts with VPS13A (via FFAT motif). Interacts with RB1CC1 (via phosphorylated FFAT motif), MIGA2 (via phosphorylated FFAT motif), RMDN3 (via phosphorylated FFAT motif), OSBPL1A (via FFAT motif), KCNB1 (via phosphorylated FFAT motif) and KCNB2 (via phosphorylated FFAT motif). Interacts (via MSP domain) with WDR44 (via FFAT motif); the interactions connect the endoplasmic reticulum (ER) with the endosomal tubule. As to quaternary structure, (Microbial infection) Interacts (via MSP domain) with hepatitis C virus (HCV) non-structural protein 5A (via disordered domain D3). Interacts with HCV RNA-directed RNA polymerase. As to expression, ubiquitous. Isoform 1 predominates.

It is found in the endoplasmic reticulum membrane. Functionally, endoplasmic reticulum (ER)-anchored protein that mediates the formation of contact sites between the ER and endosomes via interaction with FFAT motif-containing proteins such as STARD3 or WDR44. Interacts with STARD3 in a FFAT motif phosphorylation dependent manner. Via interaction with WDR44 participates in neosynthesized protein export. Participates in the endoplasmic reticulum unfolded protein response (UPR) by inducing ERN1/IRE1 activity. Involved in cellular calcium homeostasis regulation. This is Vesicle-associated membrane protein-associated protein B/C from Homo sapiens (Human).